A 199-amino-acid chain; its full sequence is N-(5'-phosphoribosyl)anthranilate isomerase (199 aa).

Belongs to the TrpF family.

The catalysed reaction is N-(5-phospho-beta-D-ribosyl)anthranilate = 1-(2-carboxyphenylamino)-1-deoxy-D-ribulose 5-phosphate. The protein operates within amino-acid biosynthesis; L-tryptophan biosynthesis; L-tryptophan from chorismate: step 3/5. This Streptococcus pneumoniae serotype 19F (strain G54) protein is N-(5'-phosphoribosyl)anthranilate isomerase.